The following is a 96-amino-acid chain: Glutamyl-tRNA(Gln) amidotransferase subunit C (96 aa).

The protein belongs to the GatC family. Heterotrimer of A, B and C subunits.

It catalyses the reaction L-glutamyl-tRNA(Gln) + L-glutamine + ATP + H2O = L-glutaminyl-tRNA(Gln) + L-glutamate + ADP + phosphate + H(+). It carries out the reaction L-aspartyl-tRNA(Asn) + L-glutamine + ATP + H2O = L-asparaginyl-tRNA(Asn) + L-glutamate + ADP + phosphate + 2 H(+). Its function is as follows. Allows the formation of correctly charged Asn-tRNA(Asn) or Gln-tRNA(Gln) through the transamidation of misacylated Asp-tRNA(Asn) or Glu-tRNA(Gln) in organisms which lack either or both of asparaginyl-tRNA or glutaminyl-tRNA synthetases. The reaction takes place in the presence of glutamine and ATP through an activated phospho-Asp-tRNA(Asn) or phospho-Glu-tRNA(Gln). In Nostoc sp. (strain PCC 7120 / SAG 25.82 / UTEX 2576), this protein is Glutamyl-tRNA(Gln) amidotransferase subunit C.